The chain runs to 598 residues: NADH-ubiquinone oxidoreductase chain 5 (598 aa).

Helical transmembrane passes span 6-26 (LTLIMNSGALLTIIVLLPPII), 32-52 (MILTTKLVKISMFISLIPLTI), 84-100 (YTVIFTPIALMITWSIM), 113-133 (MDKFFKYLLLFLITMITFISA), 136-156 (LLQLFIGWEGVGIMSFLLISW), 241-261 (TPVSALLHSSTMVVAGVFLLI), 272-292 (LMLEMTLCLGAMTTICAALCA), 301-320 (IIAFSTSSQLGLMMVAVGLN), 325-347 (AFLHMCTHAFFKAMLFLCSGSII), 370-390 (TTCMTIGSAALMGLPFLAGFF), 409-429 (LMVTLMAVTLTTAYSSRLIIM), 456-476 (LAWGSLISGLILTSTLPPMKP), 478-498 (IFTMPTYIKTIALMMFIISLI), and 576-596 (LNSATLPLMAFALTLITLSLT).

The protein belongs to the complex I subunit 5 family.

The protein localises to the mitochondrion inner membrane. It catalyses the reaction a ubiquinone + NADH + 5 H(+)(in) = a ubiquinol + NAD(+) + 4 H(+)(out). In terms of biological role, core subunit of the mitochondrial membrane respiratory chain NADH dehydrogenase (Complex I) that is believed to belong to the minimal assembly required for catalysis. Complex I functions in the transfer of electrons from NADH to the respiratory chain. The immediate electron acceptor for the enzyme is believed to be ubiquinone. This chain is NADH-ubiquinone oxidoreductase chain 5 (MT-ND5), found in Petromyzon marinus (Sea lamprey).